The primary structure comprises 115 residues: Probable K(+)/H(+) antiporter subunit C (115 aa).

Helical transmembrane passes span 4–21 (ILSA…YLLL), 28–47 (VIIG…FGMG), and 75–97 (ALVL…VLLA).

This sequence belongs to the CPA3 antiporters (TC 2.A.63) subunit C family. In terms of assembly, may form a hetero-oligomeric complex that consists of six subunits: PhaAB, PhaC, PhaD, PhaE, PhaF and PhaG.

It localises to the cell membrane. Part of a K(+) efflux system which is required for the adaptation of R.meliloti to alkaline pH as well as for the infection process during symbiotic nodule development. In Rhizobium meliloti (strain 1021) (Ensifer meliloti), this protein is Probable K(+)/H(+) antiporter subunit C (phaC).